We begin with the raw amino-acid sequence, 414 residues long: Glutamyl-tRNA reductase (414 aa).

Residues T48–R51, S104, E109–Q111, and Q115 each bind substrate. The active-site Nucleophile is C49. Residue G184–I189 coordinates NADP(+).

This sequence belongs to the glutamyl-tRNA reductase family. Homodimer.

The enzyme catalyses (S)-4-amino-5-oxopentanoate + tRNA(Glu) + NADP(+) = L-glutamyl-tRNA(Glu) + NADPH + H(+). Its pathway is porphyrin-containing compound metabolism; protoporphyrin-IX biosynthesis; 5-aminolevulinate from L-glutamyl-tRNA(Glu): step 1/2. Functionally, catalyzes the NADPH-dependent reduction of glutamyl-tRNA(Glu) to glutamate 1-semialdehyde (GSA). This is Glutamyl-tRNA reductase from Methylobacillus flagellatus (strain ATCC 51484 / DSM 6875 / VKM B-1610 / KT).